We begin with the raw amino-acid sequence, 237 residues long: ATP-dependent dethiobiotin synthetase BioD (237 aa).

21–26 (GVGKTV) is an ATP binding site. Mg(2+) is bound at residue T25. K48 is an active-site residue. T52 contacts substrate. Residues D56, 117 to 120 (EALG), 177 to 178 (SC), and 209 to 211 (PYL) contribute to the ATP site. Mg(2+) contacts are provided by D56 and E117.

The protein belongs to the dethiobiotin synthetase family. In terms of assembly, homodimer. It depends on Mg(2+) as a cofactor.

The protein localises to the cytoplasm. It carries out the reaction (7R,8S)-7,8-diammoniononanoate + CO2 + ATP = (4R,5S)-dethiobiotin + ADP + phosphate + 3 H(+). It catalyses the reaction (7R,8S)-8-amino-7-(carboxyamino)nonanoate + ATP = (4R,5S)-dethiobiotin + ADP + phosphate + H(+). Its pathway is cofactor biosynthesis; biotin biosynthesis; biotin from 7,8-diaminononanoate: step 1/2. Its function is as follows. Catalyzes a mechanistically unusual reaction, the ATP-dependent insertion of CO2 between the N7 and N8 nitrogen atoms of 7,8-diaminopelargonic acid (DAPA, also called 7,8-diammoniononanoate) to form a ureido ring. This cyanobacterium does not encode bioA (which catalyzes the formation of the precursor for this reaction in the cannonical pathway), instead it encodes bioU, which replaces bioA and also performs the first half of the cannonical BioD reaction. Thus in this bacteria BioD has a different substrate. In Synechocystis replacement of bioU by bioA from E.coli leads to biotin synthesis, showing BioD can use the 'cannonical' 7,8-diammoniononanoate as a substrate. The protein is ATP-dependent dethiobiotin synthetase BioD of Synechocystis sp. (strain ATCC 27184 / PCC 6803 / Kazusa).